The following is a 96-amino-acid chain: UPF0235 protein VC_0458 (96 aa).

Belongs to the UPF0235 family.

In Vibrio cholerae serotype O1 (strain ATCC 39315 / El Tor Inaba N16961), this protein is UPF0235 protein VC_0458.